Here is a 340-residue protein sequence, read N- to C-terminus: DNA-directed RNA polymerase subunit alpha (340 aa).

The tract at residues 1–233 (MYRNWRDLIS…EQLSIFINFD (233 aa)) is alpha N-terminal domain (alpha-NTD). An alpha C-terminal domain (alpha-CTD) region spans residues 251–340 (VNENLYRSVD…RIRGERKDEE (90 aa)).

Belongs to the RNA polymerase alpha chain family. Homodimer. The RNAP catalytic core consists of 2 alpha, 1 beta, 1 beta' and 1 omega subunit. When a sigma factor is associated with the core the holoenzyme is formed, which can initiate transcription.

It carries out the reaction RNA(n) + a ribonucleoside 5'-triphosphate = RNA(n+1) + diphosphate. Functionally, DNA-dependent RNA polymerase catalyzes the transcription of DNA into RNA using the four ribonucleoside triphosphates as substrates. This is DNA-directed RNA polymerase subunit alpha from Geobacter metallireducens (strain ATCC 53774 / DSM 7210 / GS-15).